Consider the following 155-residue polypeptide: Endoribonuclease YbeY (155 aa).

H114, H118, and H124 together coordinate Zn(2+).

It belongs to the endoribonuclease YbeY family. Zn(2+) is required as a cofactor.

The protein resides in the cytoplasm. Its function is as follows. Single strand-specific metallo-endoribonuclease involved in late-stage 70S ribosome quality control and in maturation of the 3' terminus of the 16S rRNA. This Erwinia tasmaniensis (strain DSM 17950 / CFBP 7177 / CIP 109463 / NCPPB 4357 / Et1/99) protein is Endoribonuclease YbeY.